The following is a 336-amino-acid chain: MADFQTSTQRAKWIFTPQKLAERYKAANQRAVQMLEKCGTTQVEVDASGSLTYPKDKVGSGDQADKKLKPLSADEERFMRAFYEAKVQEVCSAFAFPHKIQATALQYFKRFYLQWSVMQHHPKEIMLTCVYAACKIEENHVSAEEIGKGINQDHRIILKYEMAVLQSLEFDLIVYAPYRAIEGFVNNMEEFLQARDDEIQKLESLLKGATAEADKVMLTDAPLLFPPGQLALASLRIANGVLGVIDFDRYLENIVSQPNSEHTTSELTKLLDNIEYLVKNYKCPSEKDMKHINRKLKSCLGHSSSHDESKKREKRSKHKSHRSSNDTPNGAPPPIG.

Ala2 bears the N-acetylalanine mark. Positions 297 to 336 (KSCLGHSSSHDESKKREKRSKHKSHRSSNDTPNGAPPPIG) are disordered. Over residues 312–322 (REKRSKHKSHR) the composition is skewed to basic residues.

This sequence belongs to the cyclin family. In terms of assembly, interacts with CDKA-1, CDKD-2 and CDKD-3, but not CDKD-1 and CDKF-1.

Its subcellular location is the cytoplasm. It localises to the nucleus. Functionally, associates with CDK-2 and CDK-3 and activates the CDK kinases. In Arabidopsis thaliana (Mouse-ear cress), this protein is Cyclin-H1-1 (CYCH1-1).